Consider the following 468-residue polypeptide: MSTGKIAQVVGPVVDVAFATDDKLPEINNALVVYKDGDKSQRIVLEVALELGDGLVRTIAMESTDGLTRGLEVFDTGRAISVPVGKETLGRVFNVLGDTIDLDKPFAEDAERQPIHKKAPSFDDLSTSTEILETGIKVIDLLAPYLKGGKVGLFGGAGVGKTVLIQELIHNIAQEHGGISVFTGVGERTREGNDLYWEMKESGVIEKTAMVFGQMNEPPGARMRVALTGLTIAEYFRDVEGQDVLLFIDNIFRFTQAGSEVSALLGRMPSAVGYQPTLATEMGQLQERITSTKKGSVTSIQAIYVPADDYTDPAPATAFAHLDSTTNLERRLTQMGIYPAVDPLASSSRALSPEIVGQEHYDVATEVQHVLQRYRELQDIIAILGMDELSDEEKTLVGRARRIQFFLSQNFNVAEQFTGQPGSYVPVAETVRGFKEILEGKYDELPEDAFRSVGAIEDVVEKAKNMGV.

155–162 (GGAGVGKT) contacts ATP.

It belongs to the ATPase alpha/beta chains family. In terms of assembly, F-type ATPases have 2 components, CF(1) - the catalytic core - and CF(0) - the membrane proton channel. CF(1) has five subunits: alpha(3), beta(3), gamma(1), delta(1), epsilon(1). CF(0) has three main subunits: a(1), b(2) and c(9-12). The alpha and beta chains form an alternating ring which encloses part of the gamma chain. CF(1) is attached to CF(0) by a central stalk formed by the gamma and epsilon chains, while a peripheral stalk is formed by the delta and b chains.

It is found in the cell membrane. The enzyme catalyses ATP + H2O + 4 H(+)(in) = ADP + phosphate + 5 H(+)(out). Functionally, produces ATP from ADP in the presence of a proton gradient across the membrane. The catalytic sites are hosted primarily by the beta subunits. The sequence is that of ATP synthase subunit beta from Streptococcus mutans serotype c (strain ATCC 700610 / UA159).